A 459-amino-acid chain; its full sequence is MYKIDFNNPIHIHFIGIGGISMSGLAKILLSKGFSVSGSDSHSSALTDELIGDGCLVSVPQSAGNITNDIDLVVYTAAIHPDNPEFKAAKEAGLPMLTRAELLGQIMTVYKNAINIAGTHGKTTTTSMVSEILLAASMDPTISVGGILNSIGGNTRVGGDNYFVAEACEYTNSFLSFNPTMNIILNVKEDHLDFFKDIDDIRHSFKLFTEKLPSDGTLIINTDIDNYEYFYQDTDCEVITFGSDPAKSMYSASDIAYDELGRCTYSLLINGEKADTITLGVPGLHNVYNSLAAIAATRKLSVDMEHIKAGLSNFKGTNRRFEKKGTFNGVTVIDDYAHHPDEIRATLSSAAHYPHNRVWVVFQPHTYSRTKLLFNEFADALSHADKVVLAKIYAARETDTLGISSADLCEKIKSLGKECVYIDNFEDIEKYLLKNCINGDLLITMGAGDIYKVGEDLLK.

G118 to T124 serves as a coordination point for ATP.

This sequence belongs to the MurCDEF family.

It is found in the cytoplasm. The catalysed reaction is UDP-N-acetyl-alpha-D-muramate + L-alanine + ATP = UDP-N-acetyl-alpha-D-muramoyl-L-alanine + ADP + phosphate + H(+). The protein operates within cell wall biogenesis; peptidoglycan biosynthesis. Its function is as follows. Cell wall formation. This is UDP-N-acetylmuramate--L-alanine ligase from Lachnospira eligens (strain ATCC 27750 / DSM 3376 / VPI C15-48 / C15-B4) (Eubacterium eligens).